Reading from the N-terminus, the 345-residue chain is Trace amine-associated receptor 6 (345 aa).

Residues 1–32 (MGSNSSPPTVLQLCYENVTGSCVKTPYSPGSR) are Extracellular-facing. N17 is a glycosylation site (N-linked (GlcNAc...) asparagine). Disulfide bonds link C22–C186 and C105–C190. A helical transmembrane segment spans residues 33–53 (VILYAVFGFGAVLAVFGNLMV). Residues 54–68 (MISILHFKQLHSPTN) lie on the Cytoplasmic side of the membrane. A helical membrane pass occupies residues 69–89 (FLIASLACADFGVGISVMPFS). The Extracellular portion of the chain corresponds to 90-107 (MVRSIESCWYFGRSFCTF). Residues 108 to 128 (HTCCDVAFCYSSLFHLSFISI) form a helical membrane-spanning segment. Residues 129 to 147 (DRYIAVTDPLVYPTKFTVS) are Cytoplasmic-facing. A helical membrane pass occupies residues 148-168 (VSGICIGVSWILPLVYSGAVF). The Extracellular portion of the chain corresponds to 169-202 (YTGVYDDGLEELSSALNCVGGCQVVVNQNWVLID). Positions 174–187 (DDGLEELSSALNCV) are extracellular Loop 2 (ECL2). Residues 203–223 (FLSFLIPTLVMIILYGNIFLV) traverse the membrane as a helical segment. The Cytoplasmic segment spans residues 224 to 259 (ARQQAKKIENIGSKTESSSESYKARVARRERKAAKT). The helical transmembrane segment at 260–276 (LGITVVAFMISWLPYSI) threads the bilayer. Over 277–282 (DSLVDA) the chain is Extracellular. A helical transmembrane segment spans residues 283-302 (FMGFITPAYIYEICVWCAYY). The Cytoplasmic portion of the chain corresponds to 303–345 (NSAMNPLIYALFYPWFKKAIKVIMSGQVFKNSSATMNLFSEQI).

Belongs to the G-protein coupled receptor 1 family. Specifically expressed in neurons of the olfactory epithelium, to discrete glomeruli predominantly localized to a confined bulb region. Present in a ventral area of the main olfactory epithelium.

The protein localises to the cell membrane. Olfactory receptor specific for trace amines, such as beta-phenylethylamine (beta-PEA). Trace amine compounds are enriched in animal body fluids and act on trace amine-associated receptors (TAARs) to elicit both intraspecific and interspecific innate behaviors. Beta-PEA-binding causes a conformation change that triggers signaling via G(s)-class of G alpha proteins (GNAL or GNAS). The sequence is that of Trace amine-associated receptor 6 from Mus musculus (Mouse).